The primary structure comprises 435 residues: Polyadenylate-binding protein RBP47B (435 aa).

Over residues 1–15 (MQTTNGSDSTLATSG) the composition is skewed to polar residues. Disordered regions lie at residues 1-41 (MQTT…QQWM) and 85-104 (YGSY…RGSG). Over residues 29-41 (QWQQQQQQQQQWM) the composition is skewed to low complexity. RRM domains are found at residues 108–188 (KTLW…WASF), 202–281 (LSVF…IATP), and 321–393 (ATIF…WGRS). The disordered stretch occupies residues 392–412 (RSPNKQWRGDSGQQWNGGYSR).

The protein belongs to the polyadenylate-binding RBP47 family. In terms of assembly, interacts with the poly(A) tail of mRNA in nucleus. Expressed at low levels in leaves, stems, flowers, and seedlings.

It is found in the nucleus. The protein localises to the cytoplasmic granule. Functionally, heterogeneous nuclear ribonucleoprotein (hnRNP)-protein binding the poly(A) tail of mRNA and probably involved in some steps of pre-mRNA maturation. The chain is Polyadenylate-binding protein RBP47B (RBP47B) from Arabidopsis thaliana (Mouse-ear cress).